A 318-amino-acid chain; its full sequence is Acetyl-coenzyme A carboxylase carboxyl transferase subunit alpha (318 aa).

Residues Asn-32–Arg-293 enclose the CoA carboxyltransferase C-terminal domain.

Belongs to the AccA family. As to quaternary structure, acetyl-CoA carboxylase is a heterohexamer composed of biotin carboxyl carrier protein (AccB), biotin carboxylase (AccC) and two subunits each of ACCase subunit alpha (AccA) and ACCase subunit beta (AccD).

The protein localises to the cytoplasm. It catalyses the reaction N(6)-carboxybiotinyl-L-lysyl-[protein] + acetyl-CoA = N(6)-biotinyl-L-lysyl-[protein] + malonyl-CoA. The protein operates within lipid metabolism; malonyl-CoA biosynthesis; malonyl-CoA from acetyl-CoA: step 1/1. Functionally, component of the acetyl coenzyme A carboxylase (ACC) complex. First, biotin carboxylase catalyzes the carboxylation of biotin on its carrier protein (BCCP) and then the CO(2) group is transferred by the carboxyltransferase to acetyl-CoA to form malonyl-CoA. This chain is Acetyl-coenzyme A carboxylase carboxyl transferase subunit alpha, found in Halorhodospira halophila (strain DSM 244 / SL1) (Ectothiorhodospira halophila (strain DSM 244 / SL1)).